Reading from the N-terminus, the 96-residue chain is Putative defensin-like protein 236 (96 aa).

The first 23 residues, 1-23 (MKNATSLIIYCFLMFLLMNNVKG), serve as a signal peptide directing secretion. 4 disulfides stabilise this stretch: C31–C93, C41–C70, C49–C83, and C68–C85.

The protein belongs to the DEFL family.

It localises to the secreted. This chain is Putative defensin-like protein 236 (SCRL20), found in Arabidopsis thaliana (Mouse-ear cress).